A 435-amino-acid chain; its full sequence is uncharacterized protein (435 aa).

A run of 12 helical transmembrane segments spans residues 26-46 (LLSG…VAAP), 61-81 (IVFS…GSLL), 96-116 (IWSF…LYLF), 119-139 (LIGL…ALWF), 150-170 (LFDS…AFLV), 177-197 (VAFL…WQYY), 242-262 (VWGL…LLTW), 281-301 (FTAV…GWLV), 325-345 (FGFF…IICI), 347-367 (IGLA…AELA), 385-405 (LFGG…TGSF), and 407-427 (LSFL…VFVL).

This sequence belongs to the major facilitator superfamily. Phthalate permease family.

It localises to the cell membrane. This is an uncharacterized protein from Bacillus subtilis (strain 168).